Here is a 196-residue protein sequence, read N- to C-terminus: Protein TEX261 (196 aa).

A run of 5 helical transmembrane segments spans residues 3 to 23, 42 to 62, 70 to 90, 97 to 117, and 125 to 145; these read FMYV…TLAV, SRII…LYVF, IGVG…FPFI, FILS…FFAE, and VLAY…VSLS.

It belongs to the SVP26 family. In terms of tissue distribution, detected in testis.

It localises to the membrane. The sequence is that of Protein TEX261 (Tex261) from Mus musculus (Mouse).